We begin with the raw amino-acid sequence, 440 residues long: Ribulose bisphosphate carboxylase large chain (440 aa).

N6,N6,N6-trimethyllysine is present on K4. Positions 113 and 163 each coordinate substrate. The active-site Proton acceptor is K165. K167 is a binding site for substrate. K191, D193, and E194 together coordinate Mg(2+). Position 191 is an N6-carboxylysine (K191). H284 serves as the catalytic Proton acceptor. Residues R285, H317, and S369 each coordinate substrate.

It belongs to the RuBisCO large chain family. Type I subfamily. As to quaternary structure, heterohexadecamer of 8 large chains and 8 small chains; disulfide-linked. The disulfide link is formed within the large subunit homodimers. It depends on Mg(2+) as a cofactor. The disulfide bond which can form in the large chain dimeric partners within the hexadecamer appears to be associated with oxidative stress and protein turnover.

It localises to the plastid. Its subcellular location is the chloroplast. The enzyme catalyses 2 (2R)-3-phosphoglycerate + 2 H(+) = D-ribulose 1,5-bisphosphate + CO2 + H2O. It catalyses the reaction D-ribulose 1,5-bisphosphate + O2 = 2-phosphoglycolate + (2R)-3-phosphoglycerate + 2 H(+). RuBisCO catalyzes two reactions: the carboxylation of D-ribulose 1,5-bisphosphate, the primary event in carbon dioxide fixation, as well as the oxidative fragmentation of the pentose substrate in the photorespiration process. Both reactions occur simultaneously and in competition at the same active site. The chain is Ribulose bisphosphate carboxylase large chain from Pteris vittata (Chinese ladder brake).